We begin with the raw amino-acid sequence, 189 residues long: Protein Flattop (189 aa).

The disordered stretch occupies residues E112–K189. The span at A137 to V148 shows a compositional bias: polar residues. Residues N178–K189 show a composition bias toward pro residues.

It belongs to the Flattop family. Microtubule inner protein component of sperm flagellar doublet microtubules. Interacts with DLG3. As to expression, expressed in mono- and multiciliated tissues during planar cell polarity acquisition.

It is found in the cytoplasm. The protein resides in the cytoskeleton. It localises to the cilium basal body. The protein localises to the cilium axoneme. Its subcellular location is the flagellum axoneme. It is found in the apical cell membrane. Functionally, microtubule inner protein (MIP) part of the dynein-decorated doublet microtubules (DMTs) in cilia axoneme. Acts as a regulator of cilium basal body docking and positioning in mono- and multiciliated cells. Regulates basal body docking and cilia formation in multiciliated lung cells. Regulates kinocilium positioning and stereocilia bundle morphogenesis in the inner ear. In Mus musculus (Mouse), this protein is Protein Flattop.